The sequence spans 699 residues: Elongation factor G (699 aa).

A tr-type G domain is found at 8 to 288 (EDYRNFGIMA…AVCEYLPSPL (281 aa)). Residues 17-24 (AHIDAGKT), 86-90 (DTPGH), and 140-143 (NKMD) each bind GTP.

This sequence belongs to the TRAFAC class translation factor GTPase superfamily. Classic translation factor GTPase family. EF-G/EF-2 subfamily.

It is found in the cytoplasm. Its function is as follows. Catalyzes the GTP-dependent ribosomal translocation step during translation elongation. During this step, the ribosome changes from the pre-translocational (PRE) to the post-translocational (POST) state as the newly formed A-site-bound peptidyl-tRNA and P-site-bound deacylated tRNA move to the P and E sites, respectively. Catalyzes the coordinated movement of the two tRNA molecules, the mRNA and conformational changes in the ribosome. This is Elongation factor G from Allorhizobium ampelinum (strain ATCC BAA-846 / DSM 112012 / S4) (Agrobacterium vitis (strain S4)).